A 148-amino-acid chain; its full sequence is Large ribosomal subunit protein uL11 (148 aa).

The disordered stretch occupies residues 89-108; it reads EKKKGSGAHKPGKEKVGQVT.

It belongs to the universal ribosomal protein uL11 family. As to quaternary structure, part of the ribosomal stalk of the 50S ribosomal subunit. Interacts with L10 and the large rRNA to form the base of the stalk. L10 forms an elongated spine to which L12 dimers bind in a sequential fashion forming a multimeric L10(L12)X complex. Post-translationally, one or more lysine residues are methylated.

Functionally, forms part of the ribosomal stalk which helps the ribosome interact with GTP-bound translation factors. This Anaeromyxobacter dehalogenans (strain 2CP-1 / ATCC BAA-258) protein is Large ribosomal subunit protein uL11.